Reading from the N-terminus, the 1342-residue chain is DNA-directed RNA polymerase subunit beta (1342 aa).

Belongs to the RNA polymerase beta chain family. In terms of assembly, the RNAP catalytic core consists of 2 alpha, 1 beta, 1 beta' and 1 omega subunit. When a sigma factor is associated with the core the holoenzyme is formed, which can initiate transcription.

The catalysed reaction is RNA(n) + a ribonucleoside 5'-triphosphate = RNA(n+1) + diphosphate. In terms of biological role, DNA-dependent RNA polymerase catalyzes the transcription of DNA into RNA using the four ribonucleoside triphosphates as substrates. This chain is DNA-directed RNA polymerase subunit beta, found in Enterobacter sp. (strain 638).